A 125-amino-acid chain; its full sequence is Fluoride-specific ion channel FluC (125 aa).

4 helical membrane passes run 4–24 (WLFV…ISEL), 35–55 (YGTL…FALI), 69–89 (LMVG…DTVV), and 103–123 (MGLN…LVAS). Na(+) contacts are provided by Gly75 and Thr78.

It belongs to the fluoride channel Fluc/FEX (TC 1.A.43) family.

The protein localises to the cell inner membrane. The enzyme catalyses fluoride(in) = fluoride(out). With respect to regulation, na(+) is not transported, but it plays an essential structural role and its presence is essential for fluoride channel function. Its function is as follows. Fluoride-specific ion channel. Important for reducing fluoride concentration in the cell, thus reducing its toxicity. The chain is Fluoride-specific ion channel FluC from Aeromonas salmonicida (strain A449).